A 595-amino-acid polypeptide reads, in one-letter code: Solute carrier family 13 member 1 (595 aa).

Transmembrane regions (helical) follow at residues F13–K33, I40–L60, V77–T97, V113–F133, and L134–V154. A glycan (N-linked (GlcNAc...) asparagine) is linked at N174. The segment at Q190–T218 is disordered. The segment covering D208 to T218 has biased composition (basic and acidic residues). 8 helical membrane passes run L239–T259, S283–L303, I348–F368, G381–A401, P464–L484, P491–N511, P512–A532, and A553–I573. N591 carries an N-linked (GlcNAc...) asparagine glycan.

This sequence belongs to the SLC13A/DASS transporter (TC 2.A.47) family. NADC subfamily. As to expression, kidney and intestine.

It localises to the apical cell membrane. The enzyme catalyses sulfate(out) + 3 Na(+)(out) = sulfate(in) + 3 Na(+)(in). It catalyses the reaction selenate(out) + 3 Na(+)(out) = selenate(in) + 3 Na(+)(in). The catalysed reaction is thiosulfate(out) + 3 Na(+)(out) = thiosulfate(in) + 3 Na(+)(in). Functionally, sodium:sulfate symporter that mediates sulfate reabsorption in the kidney and small intestine. Can also mediate the transport of selenate and thiosulfate. The sequence is that of Solute carrier family 13 member 1 (Slc13a1) from Rattus norvegicus (Rat).